The following is a 570-amino-acid chain: Glutamate--tRNA ligase (570 aa).

Positions 107-117 match the 'HIGH' region motif; that stretch reads PNPDFVLHLGS.

Belongs to the class-I aminoacyl-tRNA synthetase family. Glutamate--tRNA ligase type 2 subfamily.

The protein localises to the cytoplasm. The enzyme catalyses tRNA(Glu) + L-glutamate + ATP = L-glutamyl-tRNA(Glu) + AMP + diphosphate. Functionally, catalyzes the attachment of glutamate to tRNA(Glu) in a two-step reaction: glutamate is first activated by ATP to form Glu-AMP and then transferred to the acceptor end of tRNA(Glu). This Pyrobaculum calidifontis (strain DSM 21063 / JCM 11548 / VA1) protein is Glutamate--tRNA ligase.